Here is a 250-residue protein sequence, read N- to C-terminus: 5'-nucleotidase SurE (250 aa).

D8, D9, S39, and N91 together coordinate a divalent metal cation.

It belongs to the SurE nucleotidase family. Requires a divalent metal cation as cofactor.

The protein localises to the cytoplasm. The catalysed reaction is a ribonucleoside 5'-phosphate + H2O = a ribonucleoside + phosphate. Functionally, nucleotidase that shows phosphatase activity on nucleoside 5'-monophosphates. The chain is 5'-nucleotidase SurE from Shewanella halifaxensis (strain HAW-EB4).